The chain runs to 490 residues: GTPase Der (490 aa).

2 consecutive EngA-type G domains span residues 3-166 and 203-376; these read PVVA…MEDL and IKLA…DSST. Residues 9–16, 56–60, 118–121, 209–216, 256–260, and 321–324 each bind GTP; these read GRPNVGKS, DTGGI, NKTD, DTAGV, and NKWD. Residues 377 to 461 form the KH-like domain; the sequence is RRVGTSMLTR…PIRIQFKEGE (85 aa).

It belongs to the TRAFAC class TrmE-Era-EngA-EngB-Septin-like GTPase superfamily. EngA (Der) GTPase family. In terms of assembly, associates with the 50S ribosomal subunit.

Functionally, GTPase that plays an essential role in the late steps of ribosome biogenesis. This is GTPase Der from Escherichia coli O81 (strain ED1a).